A 203-amino-acid polypeptide reads, in one-letter code: Nucleoside triphosphate pyrophosphatase (203 aa).

D80 acts as the Proton acceptor in catalysis.

The protein belongs to the Maf family. A divalent metal cation is required as a cofactor.

Its subcellular location is the cytoplasm. The catalysed reaction is a ribonucleoside 5'-triphosphate + H2O = a ribonucleoside 5'-phosphate + diphosphate + H(+). It catalyses the reaction a 2'-deoxyribonucleoside 5'-triphosphate + H2O = a 2'-deoxyribonucleoside 5'-phosphate + diphosphate + H(+). Its function is as follows. Nucleoside triphosphate pyrophosphatase. May have a dual role in cell division arrest and in preventing the incorporation of modified nucleotides into cellular nucleic acids. This Gluconobacter oxydans (strain 621H) (Gluconobacter suboxydans) protein is Nucleoside triphosphate pyrophosphatase.